Consider the following 719-residue polypeptide: DNA ligase (719 aa).

NAD(+)-binding positions include 42–46 (DAAYD), 92–93 (SL), and Glu-126. Lys-128 functions as the N6-AMP-lysine intermediate in the catalytic mechanism. NAD(+) is bound by residues Arg-149, Glu-185, Lys-301, and Lys-325. Positions 430, 433, 448, and 454 each coordinate Zn(2+). Positions 640 to 719 (ATGSPVEGKT…DDWFKLVGED (80 aa)) constitute a BRCT domain.

This sequence belongs to the NAD-dependent DNA ligase family. LigA subfamily. Requires Mg(2+) as cofactor. Mn(2+) is required as a cofactor.

The enzyme catalyses NAD(+) + (deoxyribonucleotide)n-3'-hydroxyl + 5'-phospho-(deoxyribonucleotide)m = (deoxyribonucleotide)n+m + AMP + beta-nicotinamide D-nucleotide.. Its function is as follows. DNA ligase that catalyzes the formation of phosphodiester linkages between 5'-phosphoryl and 3'-hydroxyl groups in double-stranded DNA using NAD as a coenzyme and as the energy source for the reaction. It is essential for DNA replication and repair of damaged DNA. The polypeptide is DNA ligase (Brucella ovis (strain ATCC 25840 / 63/290 / NCTC 10512)).